The following is a 535-amino-acid chain: Succinate-semialdehyde dehydrogenase, mitochondrial (535 aa).

A mitochondrion-targeting transit peptide spans methionine 1–tyrosine 47. Residue lysine 126 is modified to N6-acetyllysine; alternate. N6-succinyllysine; alternate is present on lysine 126. N6-succinyllysine is present on residues lysine 135 and lysine 184. Residues arginine 213 and lysine 228–glutamate 231 each bind NAD(+). Residue arginine 213 coordinates substrate. Lysine 265 bears the N6-acetyllysine; alternate mark. Lysine 265 carries the N6-succinyllysine; alternate modification. Glycine 284–glycine 289 contributes to the NAD(+) binding site. The Proton acceptor role is filled by glutamate 306. Arginine 334 is a substrate binding site. The active-site Nucleophile is the cysteine 340. Cysteine 340 and cysteine 342 form a disulfide bridge. The residue at position 365 (lysine 365) is an N6-acetyllysine. Lysine 402 carries the N6-succinyllysine modification. At lysine 411 the chain carries N6-acetyllysine. A substrate-binding site is contributed by serine 498. Serine 499 is modified (phosphoserine).

Belongs to the aldehyde dehydrogenase family. As to quaternary structure, homotetramer.

Its subcellular location is the mitochondrion. It carries out the reaction succinate semialdehyde + NAD(+) + H2O = succinate + NADH + 2 H(+). It participates in amino-acid degradation; 4-aminobutanoate degradation. Its activity is regulated as follows. Redox-regulated. Inhibited under oxydizing conditions. In terms of biological role, catalyzes one step in the degradation of the inhibitory neurotransmitter gamma-aminobutyric acid (GABA). This is Succinate-semialdehyde dehydrogenase, mitochondrial (ALDH5A1) from Pan troglodytes (Chimpanzee).